Reading from the N-terminus, the 148-residue chain is Small ribosomal subunit protein bS6 (148 aa).

The segment at 97–148 (EEGPSAMLQRRDDRERGDRGDRGPRRDFDDRGPRRPREDDRPRRSREDEGDE) is disordered.

The protein belongs to the bacterial ribosomal protein bS6 family.

Its function is as follows. Binds together with bS18 to 16S ribosomal RNA. The protein is Small ribosomal subunit protein bS6 of Chelativorans sp. (strain BNC1).